Here is a 513-residue protein sequence, read N- to C-terminus: MEMAKEQELILVLDFGSQYNQLITRRIREMGVYSELHDHEISMEEIKRLNPKGIILSGGPNSVYEEDSFTIDPEIYNLGVPILGICYGMQLTTKLLGGKVERANEREYGKAIINAKTDELFFGLPEEQNVWMSHSDKVIEIPEGFEVIADSPSTNYAAIEDKSRRIYGVQFHPEVRHTEYGNDLLRNFVRRVCDCIGEWSMENFIEIEIEKIRNQVGDRKVLCAMSGGVDSSVVAVLLHKAIGDQLTCIFVDHGLLRKGEGDMVMEQFGEGFNMNIIRVDAQERFMSKLQGVSDPEQKRKIIGNEFIYVFDDEASKLKGVDFLAQGTLYTDVIESGTKTAQTIKSHHNVGGLPEDMEFQLIEPINTLFKDEVRELGIELGIPEHLVWRQPFPGPGLGIRVLGEITEDKLEIVRESDAILRQVIREEGLEREIWQYFTVLPGIQSVGVMGDYRTYDHTVGIRAVTSIDGMTSDFARIDWEVLQKISSRIVNEVDHVNRVVYDITSKPPSTIEWE.

Residues 9-198 (LILVLDFGSQ…VRRVCDCIGE (190 aa)) enclose the Glutamine amidotransferase type-1 domain. The Nucleophile role is filled by Cys-86. Residues His-172 and Glu-174 contribute to the active site. In terms of domain architecture, GMPS ATP-PPase spans 199 to 388 (WSMENFIEIE…LGIPEHLVWR (190 aa)). Residue 226–232 (SGGVDSS) coordinates ATP.

As to quaternary structure, homodimer.

The catalysed reaction is XMP + L-glutamine + ATP + H2O = GMP + L-glutamate + AMP + diphosphate + 2 H(+). The protein operates within purine metabolism; GMP biosynthesis; GMP from XMP (L-Gln route): step 1/1. Functionally, catalyzes the synthesis of GMP from XMP. The sequence is that of GMP synthase [glutamine-hydrolyzing] from Staphylococcus saprophyticus subsp. saprophyticus (strain ATCC 15305 / DSM 20229 / NCIMB 8711 / NCTC 7292 / S-41).